We begin with the raw amino-acid sequence, 155 residues long: D-aminoacyl-tRNA deacylase (155 aa).

The Gly-cisPro motif, important for rejection of L-amino acids signature appears at 137–138; that stretch reads GP.

Belongs to the DTD family. Homodimer.

The protein resides in the cytoplasm. It catalyses the reaction glycyl-tRNA(Ala) + H2O = tRNA(Ala) + glycine + H(+). The enzyme catalyses a D-aminoacyl-tRNA + H2O = a tRNA + a D-alpha-amino acid + H(+). An aminoacyl-tRNA editing enzyme that deacylates mischarged D-aminoacyl-tRNAs. Also deacylates mischarged glycyl-tRNA(Ala), protecting cells against glycine mischarging by AlaRS. Acts via tRNA-based rather than protein-based catalysis; rejects L-amino acids rather than detecting D-amino acids in the active site. By recycling D-aminoacyl-tRNA to D-amino acids and free tRNA molecules, this enzyme counteracts the toxicity associated with the formation of D-aminoacyl-tRNA entities in vivo and helps enforce protein L-homochirality. In Roseiflexus sp. (strain RS-1), this protein is D-aminoacyl-tRNA deacylase.